A 529-amino-acid polypeptide reads, in one-letter code: Basal body-orientation factor 1 (529 aa).

Basic residues predominate over residues 1 to 13 (MPSKGKDKKKGKS). The segment at 1–22 (MPSKGKDKKKGKSRGKDTKKLI) is disordered. Coiled coils occupy residues 55-198 (DTSR…LKQE) and 271-361 (IKEK…EVER). Positions 510–529 (GKVVLPTIPKGPQESDTGTF) are disordered.

It belongs to the BBOF1 family. As to quaternary structure, interacts with MNS1 and ODF2.

It localises to the cytoplasm. The protein localises to the cytoskeleton. The protein resides in the cilium basal body. It is found in the flagellum axoneme. Plays an essential role in sperm motility and male fertility by stabilizing the sperm flagellar axonemal structure. May be required for the stability of ODF2 and MANS1 proteins. Dispensable for the assembly and function of motile cilia. The sequence is that of Basal body-orientation factor 1 from Macaca fascicularis (Crab-eating macaque).